Reading from the N-terminus, the 200-residue chain is Dual specificity tyrosine-phosphorylation-regulated kinase 1A (200 aa).

Tyr41 carries the phosphotyrosine; by autocatalysis modification. Lys58 is a binding site for ATP. At Tyr76 the chain carries Phosphotyrosine; by autocatalysis. The residue at position 88 (Ser88) is a Phosphoserine; by autocatalysis. Thr122 carries the phosphothreonine; by autocatalysis modification.

The protein belongs to the protein kinase superfamily. CMGC Ser/Thr protein kinase family. MNB/DYRK subfamily. As to quaternary structure, interacts with RAD54L2/ARIP4. Interacts with CRY2. Interacts with RANBP9. Interacts with WDR68. Interacts with SIRT1. Post-translationally, can also autophosphorylate on serine and threonine residues (in vitro). Autophosphorylated on numerous tyrosine residues.

The protein localises to the nucleus. The enzyme catalyses L-tyrosyl-[protein] + ATP = O-phospho-L-tyrosyl-[protein] + ADP + H(+). It carries out the reaction L-seryl-[protein] + ATP = O-phospho-L-seryl-[protein] + ADP + H(+). The catalysed reaction is L-threonyl-[protein] + ATP = O-phospho-L-threonyl-[protein] + ADP + H(+). It catalyses the reaction [DNA-directed RNA polymerase] + ATP = phospho-[DNA-directed RNA polymerase] + ADP + H(+). Its activity is regulated as follows. Inhibited by RANBP9. Its function is as follows. Dual-specificity kinase which possesses both serine/threonine and tyrosine kinase activities. Exhibits a substrate preference for proline at position P+1 and arginine at position P-3. Plays an important role in double-strand breaks (DSBs) repair following DNA damage. Mechanistically, phosphorylates RNF169 and increases its ability to block accumulation of TP53BP1 at the DSB sites thereby promoting homologous recombination repair (HRR). Also acts as a positive regulator of transcription by acting as a CTD kinase that mediates phosphorylation of the CTD (C-terminal domain) of the large subunit of RNA polymerase II (RNAP II) POLR2A. May play a role in a signaling pathway regulating nuclear functions of cell proliferation. Modulates alternative splicing by phosphorylating the splice factor SRSF6. Has pro-survival function and negatively regulates the apoptotic process. Promotes cell survival upon genotoxic stress through phosphorylation of SIRT1. This in turn inhibits p53/TP53 activity and apoptosis. Phosphorylates SEPTIN4, SEPTIN5 and SF3B1 at 'Thr-434'. In Oryctolagus cuniculus (Rabbit), this protein is Dual specificity tyrosine-phosphorylation-regulated kinase 1A.